The primary structure comprises 493 residues: Guanosine-5'-triphosphate,3'-diphosphate pyrophosphatase (493 aa).

This sequence belongs to the GppA/Ppx family. GppA subfamily.

The enzyme catalyses guanosine 3'-diphosphate 5'-triphosphate + H2O = guanosine 3',5'-bis(diphosphate) + phosphate + H(+). It functions in the pathway purine metabolism; ppGpp biosynthesis; ppGpp from GTP: step 2/2. Catalyzes the conversion of pppGpp to ppGpp. Guanosine pentaphosphate (pppGpp) is a cytoplasmic signaling molecule which together with ppGpp controls the 'stringent response', an adaptive process that allows bacteria to respond to amino acid starvation, resulting in the coordinated regulation of numerous cellular activities. This chain is Guanosine-5'-triphosphate,3'-diphosphate pyrophosphatase, found in Salmonella gallinarum (strain 287/91 / NCTC 13346).